The primary structure comprises 584 residues: 2-succinyl-5-enolpyruvyl-6-hydroxy-3-cyclohexene-1-carboxylate synthase (584 aa).

This sequence belongs to the TPP enzyme family. MenD subfamily. In terms of assembly, homodimer. Mg(2+) serves as cofactor. Requires Mn(2+) as cofactor. It depends on thiamine diphosphate as a cofactor.

The catalysed reaction is isochorismate + 2-oxoglutarate + H(+) = 5-enolpyruvoyl-6-hydroxy-2-succinyl-cyclohex-3-ene-1-carboxylate + CO2. It functions in the pathway quinol/quinone metabolism; 1,4-dihydroxy-2-naphthoate biosynthesis; 1,4-dihydroxy-2-naphthoate from chorismate: step 2/7. The protein operates within quinol/quinone metabolism; menaquinone biosynthesis. Catalyzes the thiamine diphosphate-dependent decarboxylation of 2-oxoglutarate and the subsequent addition of the resulting succinic semialdehyde-thiamine pyrophosphate anion to isochorismate to yield 2-succinyl-5-enolpyruvyl-6-hydroxy-3-cyclohexene-1-carboxylate (SEPHCHC). In Bacillus thuringiensis (strain Al Hakam), this protein is 2-succinyl-5-enolpyruvyl-6-hydroxy-3-cyclohexene-1-carboxylate synthase.